The sequence spans 269 residues: 4-hydroxy-tetrahydrodipicolinate reductase (269 aa).

NAD(+)-binding positions include 10 to 15 (GANGRM), Glu-36, 99 to 101 (GTT), and 123 to 126 (AANF). His-156 acts as the Proton donor/acceptor in catalysis. His-157 is a binding site for (S)-2,3,4,5-tetrahydrodipicolinate. Lys-160 acts as the Proton donor in catalysis. 166 to 167 (GT) contributes to the (S)-2,3,4,5-tetrahydrodipicolinate binding site.

It belongs to the DapB family.

The protein resides in the cytoplasm. It catalyses the reaction (S)-2,3,4,5-tetrahydrodipicolinate + NAD(+) + H2O = (2S,4S)-4-hydroxy-2,3,4,5-tetrahydrodipicolinate + NADH + H(+). It carries out the reaction (S)-2,3,4,5-tetrahydrodipicolinate + NADP(+) + H2O = (2S,4S)-4-hydroxy-2,3,4,5-tetrahydrodipicolinate + NADPH + H(+). Its pathway is amino-acid biosynthesis; L-lysine biosynthesis via DAP pathway; (S)-tetrahydrodipicolinate from L-aspartate: step 4/4. In terms of biological role, catalyzes the conversion of 4-hydroxy-tetrahydrodipicolinate (HTPA) to tetrahydrodipicolinate. The protein is 4-hydroxy-tetrahydrodipicolinate reductase of Neisseria meningitidis serogroup B (strain ATCC BAA-335 / MC58).